Here is a 369-residue protein sequence, read N- to C-terminus: Nudix hydrolase 8 (369 aa).

The Nudix hydrolase domain maps to 188-318 (SHQVGVGGFV…GDKMFKRVIE (131 aa)). The Nudix box motif lies at 225–246 (GFINESEEIFSGAVREVKEETG). The Mg(2+) site is built by glutamate 240 and glutamate 244.

It belongs to the Nudix hydrolase family. Mg(2+) is required as a cofactor. Mn(2+) serves as cofactor. Expressed in roots, stems and, at lower level, leaves.

In terms of biological role, probably mediates the hydrolysis of some nucleoside diphosphate derivatives. May be involved in plant immunity and act as a positive regulator of defense response through salicylic acid (SA) signaling. The sequence is that of Nudix hydrolase 8 (NUDT8) from Arabidopsis thaliana (Mouse-ear cress).